A 246-amino-acid chain; its full sequence is Small ribosomal subunit protein uS2 (246 aa).

It belongs to the universal ribosomal protein uS2 family.

In Helicobacter acinonychis (strain Sheeba), this protein is Small ribosomal subunit protein uS2.